The chain runs to 205 residues: FAS-associated death domain protein (205 aa).

A DED domain is found at 3–81; that stretch reads PFLVLLHSLS…RHDLLQRLDD (79 aa). Residues 97–181 form the Death domain; that stretch reads LQVAFDIVCD…LVADLVEEAQ (85 aa). The interval 181–205 is disordered; sequence QESVSKSENMSPVLRDSTVSSSETP. Serine 191 bears the Phosphoserine mark.

In terms of assembly, can self-associate. Component of the AIM2 PANoptosome complex, a multiprotein complex that drives inflammatory cell death (PANoptosis). Component of the death-induced signaling complex (DISC) composed of cell surface receptor FAS/CD95 or TNFRSF1A, adapter protein FADD and the CASP8 protease; recruitment of CASP8 to the complex is required for processing of CASP8 into the p18 and p10 subunits. Interacts (via death domain) with FAS (via death domain). Interacts directly (via DED domain) with NOL3 (via CARD domain); inhibits death-inducing signaling complex (DISC) assembly by inhibiting the increase in FAS-FADD binding induced by FAS activation. Interacts with CFLAR, PEA15 and MBD4. When phosphorylated, part of a complex containing HIPK3 and FAS. May interact with MAVS/IPS1. Interacts with MOCV v-CFLAR protein and PIDD1. Interacts with RIPK1 and TRADD. Interacts with stimulated TNFRSF10B. Interacts with DDX24.

It is found in the cytoplasm. Functionally, apoptotic adapter molecule that recruits caspases CASP8 or CASP10 to the activated FAS/CD95 or TNFRSF1A/TNFR-1 receptors. The resulting aggregate called the death-inducing signaling complex (DISC) performs CASP8 proteolytic activation. Active CASP8 initiates the subsequent cascade of caspases mediating apoptosis. Involved in interferon-mediated antiviral immune response, playing a role in the positive regulation of interferon signaling. The polypeptide is FAS-associated death domain protein (Mus musculus (Mouse)).